The following is a 336-amino-acid chain: Anthranilate phosphoribosyltransferase (336 aa).

Residues G81, 84-85, S89, 91-94, 109-117, and A121 contribute to the 5-phospho-alpha-D-ribose 1-diphosphate site; these read GD, NIST, and KHGNRGLSS. G81 is a binding site for anthranilate. S93 contributes to the Mg(2+) binding site. Residue N112 coordinates anthranilate. Residue R167 coordinates anthranilate. Mg(2+) contacts are provided by D225 and E226.

It belongs to the anthranilate phosphoribosyltransferase family. As to quaternary structure, homodimer. It depends on Mg(2+) as a cofactor.

The catalysed reaction is N-(5-phospho-beta-D-ribosyl)anthranilate + diphosphate = 5-phospho-alpha-D-ribose 1-diphosphate + anthranilate. Its pathway is amino-acid biosynthesis; L-tryptophan biosynthesis; L-tryptophan from chorismate: step 2/5. Functionally, catalyzes the transfer of the phosphoribosyl group of 5-phosphorylribose-1-pyrophosphate (PRPP) to anthranilate to yield N-(5'-phosphoribosyl)-anthranilate (PRA). This chain is Anthranilate phosphoribosyltransferase, found in Mesorhizobium japonicum (strain LMG 29417 / CECT 9101 / MAFF 303099) (Mesorhizobium loti (strain MAFF 303099)).